A 213-amino-acid polypeptide reads, in one-letter code: Putative glutathione-dependent formaldehyde-activating enzyme (213 aa).

Residues 19–165 enclose the CENP-V/GFA domain; that stretch reads FPGGTLKCLC…FRELGLETYD (147 aa). Positions 26, 28, 47, 49, 52, 94, and 97 each coordinate Zn(2+).

Belongs to the Gfa family. Zn(2+) is required as a cofactor.

It catalyses the reaction S-(hydroxymethyl)glutathione = glutathione + formaldehyde. It functions in the pathway one-carbon metabolism; formaldehyde degradation; formate from formaldehyde (glutathione route): step 1/3. Catalyzes the condensation of formaldehyde and glutathione to S-hydroxymethylglutathione. The sequence is that of Putative glutathione-dependent formaldehyde-activating enzyme from Podospora anserina (strain S / ATCC MYA-4624 / DSM 980 / FGSC 10383) (Pleurage anserina).